The primary structure comprises 445 residues: Adenylyltransferase and sulfurtransferase MOCS3 (445 aa).

Residues 49 to 70 form a disordered region; the sequence is LPPSAAAEVEPTGSPSSSSSAA. Residues G106, D127, 134 to 138, K151, and 170 to 171 each bind ATP; these read DNLHR and NN. The Zn(2+) site is built by C211 and C214. C228 acts as the Glycyl thioester intermediate; for adenylyltransferase activity in catalysis. Zn(2+) contacts are provided by C286 and C289. Residues 342 to 443 form the Rhodanese domain; it reads SGRPHLLVDV…WAKEVDPSFL (102 aa). The active-site Cysteine persulfide intermediate; for sulfurtransferase activity is the C403.

It in the N-terminal section; belongs to the HesA/MoeB/ThiF family. UBA4 subfamily. It depends on Zn(2+) as a cofactor.

It localises to the cytoplasm. Its subcellular location is the cytosol. It catalyses the reaction [molybdopterin-synthase sulfur-carrier protein]-C-terminal Gly-Gly + ATP + H(+) = [molybdopterin-synthase sulfur-carrier protein]-C-terminal Gly-Gly-AMP + diphosphate. The enzyme catalyses [molybdopterin-synthase sulfur-carrier protein]-C-terminal Gly-Gly-AMP + S-sulfanyl-L-cysteinyl-[cysteine desulfurase] + AH2 = [molybdopterin-synthase sulfur-carrier protein]-C-terminal-Gly-aminoethanethioate + L-cysteinyl-[cysteine desulfurase] + A + AMP + 2 H(+). It participates in tRNA modification; 5-methoxycarbonylmethyl-2-thiouridine-tRNA biosynthesis. It functions in the pathway cofactor biosynthesis; molybdopterin biosynthesis. Functionally, plays a central role in 2-thiolation of mcm(5)S(2)U at tRNA wobble positions of cytosolic tRNA(Lys), tRNA(Glu) and tRNA(Gln). Also essential during biosynthesis of the molybdenum cofactor. Acts by mediating the C-terminal thiocarboxylation of sulfur carriers URM1 and MOCS2A. Its N-terminus first activates URM1 and MOCS2A as acyl-adenylates (-COAMP), then the persulfide sulfur on the catalytic cysteine is transferred to URM1 and MOCS2A to form thiocarboxylation (-COSH) of their C-terminus. The reaction probably involves hydrogen sulfide that is generated from the persulfide intermediate and that acts as a nucleophile towards URM1 and MOCS2A. Subsequently, a transient disulfide bond is formed. Does not use thiosulfate as sulfur donor; NFS1 probably acting as a sulfur donor for thiocarboxylation reactions. The sequence is that of Adenylyltransferase and sulfurtransferase MOCS3 from Oryza sativa subsp. japonica (Rice).